Consider the following 349-residue polypeptide: Glycerol-3-phosphate dehydrogenase [NAD(+)], cytoplasmic (349 aa).

10-15 lines the NAD(+) pocket; that stretch reads GSGNWG. Lysine 120 provides a ligand contact to substrate. Alanine 153 is an NAD(+) binding site. Catalysis depends on lysine 204, which acts as the Proton acceptor. Arginine 269 contacts NAD(+). 269–270 is a binding site for substrate; sequence RN. Position 289 is an N6-succinyllysine (lysine 289). The NAD(+) site is built by lysine 296 and glutamine 298. A Phosphotyrosine modification is found at tyrosine 326.

Belongs to the NAD-dependent glycerol-3-phosphate dehydrogenase family. In terms of assembly, homodimer.

It is found in the cytoplasm. It carries out the reaction sn-glycerol 3-phosphate + NAD(+) = dihydroxyacetone phosphate + NADH + H(+). Functionally, has glycerol-3-phosphate dehydrogenase activity. In Bos taurus (Bovine), this protein is Glycerol-3-phosphate dehydrogenase [NAD(+)], cytoplasmic (GPD1).